A 392-amino-acid polypeptide reads, in one-letter code: L-rhamnonate dehydratase (392 aa).

Residues H22 and R48 each coordinate substrate. The Mg(2+) site is built by D214, E240, and E268. H318 (proton acceptor) is an active-site residue. Substrate is bound at residue E338.

It belongs to the mandelate racemase/muconate lactonizing enzyme family. RhamD subfamily. In terms of assembly, homooctamer; tetramer of dimers. Mg(2+) serves as cofactor.

The enzyme catalyses L-rhamnonate = 2-dehydro-3-deoxy-L-rhamnonate + H2O. In terms of biological role, catalyzes the dehydration of L-rhamnonate to 2-keto-3-deoxy-L-rhamnonate (KDR). The sequence is that of L-rhamnonate dehydratase from Burkholderia ambifaria (strain ATCC BAA-244 / DSM 16087 / CCUG 44356 / LMG 19182 / AMMD) (Burkholderia cepacia (strain AMMD)).